A 104-amino-acid polypeptide reads, in one-letter code: L-rhamnose mutarotase (104 aa).

Tyr18 contacts substrate. The Proton donor role is filled by His22. Substrate is bound by residues Tyr41 and 76–77 (WW).

This sequence belongs to the rhamnose mutarotase family. In terms of assembly, homodimer.

The protein localises to the cytoplasm. The enzyme catalyses alpha-L-rhamnose = beta-L-rhamnose. It participates in carbohydrate metabolism; L-rhamnose metabolism. Its function is as follows. Involved in the anomeric conversion of L-rhamnose. The polypeptide is L-rhamnose mutarotase (Cronobacter sakazakii (strain ATCC BAA-894) (Enterobacter sakazakii)).